The primary structure comprises 582 residues: ATP-dependent lipid A-core flippase (582 aa).

The next 5 helical transmembrane spans lie at 16–36, 69–89, 153–173, 250–270, and 275–295; these read LWPHISLYKAGLGVAVVALVI, FIILAMMFIRGLSGFVSGYCM, IIGLLGLMFWNSWQLSLVLVV, LANPIIQMIASFALVTVLYLA, and IKETLTPGTFTVVFSAMFGLL. The ABC transmembrane type-1 domain occupies 29 to 310; the sequence is VAVVALVINA…LTSVTSDFQR (282 aa). An ABC transporter domain is found at 342–578; it reads IKVDNVTFTY…DGAYAQLHRI (237 aa). 376-383 contacts ATP; that stretch reads GRSGSGKS.

It belongs to the ABC transporter superfamily. Lipid exporter (TC 3.A.1.106) family. Homodimer.

The protein resides in the cell inner membrane. The catalysed reaction is ATP + H2O + lipid A-core oligosaccharideSide 1 = ADP + phosphate + lipid A-core oligosaccharideSide 2.. Its function is as follows. Involved in lipopolysaccharide (LPS) biosynthesis. Translocates lipid A-core from the inner to the outer leaflet of the inner membrane. Transmembrane domains (TMD) form a pore in the inner membrane and the ATP-binding domain (NBD) is responsible for energy generation. The polypeptide is ATP-dependent lipid A-core flippase (Aliivibrio fischeri (strain ATCC 700601 / ES114) (Vibrio fischeri)).